Reading from the N-terminus, the 543-residue chain is Protein MGF 505-10R (543 aa).

The protein belongs to the asfivirus MGF 505 family.

Its function is as follows. Plays a role in virus cell tropism, and may be required for efficient virus replication in macrophages. In African swine fever virus (isolate Warthog/Namibia/Wart80/1980) (ASFV), this protein is Protein MGF 505-10R.